A 558-amino-acid polypeptide reads, in one-letter code: Ribonuclease Y (558 aa).

The chain crosses the membrane as a helical span at residues 3-23; sequence VLSILLILVAVGVGIFVGRQF. In terms of domain architecture, KH spans 248–311; that stretch reads TTTTVELPSN…EIAKEALQRL (64 aa). Residues 374-467 enclose the HD domain; it reads VLLHSKEVAY…VCAADALSAA (94 aa).

This sequence belongs to the RNase Y family.

Its subcellular location is the cell membrane. Endoribonuclease that initiates mRNA decay. The protein is Ribonuclease Y of Aquifex aeolicus (strain VF5).